We begin with the raw amino-acid sequence, 161 residues long: Allophycocyanin subunit alpha-B (161 aa).

N4-methylasparagine is present on N71. (2R,3E)-phycocyanobilin is bound at residue C81.

Belongs to the phycobiliprotein family. As to quaternary structure, heterohexamer of two alpha chains, one alpha-B chain and three beta chains. Post-translationally, contains one covalently linked bilin chromophore.

The protein localises to the cellular thylakoid membrane. Light-harvesting photosynthetic bile pigment-protein from the phycobiliprotein complex. Allophycocyanin has a maximum absorption at approximately 654 nanometers. In Synechocystis sp. (strain ATCC 27184 / PCC 6803 / Kazusa), this protein is Allophycocyanin subunit alpha-B (apcD).